We begin with the raw amino-acid sequence, 203 residues long: MSRNEVLLNGDINFKEVRCVGDNGEVYGIISSKEALKIAQNLGLDLVLISASAKPPVCKVMDYNKFRYQNEKKIKEAKKKQKQIEIKEIKLSTQIAQNDINYKVKHAREFIESNKHVKFKVVLKGRESQNSKAGLDVLFRVQTMMQDLANPEKEPKTEGRFVSWMFVPKAKEAPKNEKKTKENNPPFNRINLMKGENHAKNED.

A compositionally biased stretch (basic and acidic residues) spans 172-182; sequence EAPKNEKKTKE. A disordered region spans residues 172–203; it reads EAPKNEKKTKENNPPFNRINLMKGENHAKNED.

Belongs to the IF-3 family. In terms of assembly, monomer.

It is found in the cytoplasm. IF-3 binds to the 30S ribosomal subunit and shifts the equilibrium between 70S ribosomes and their 50S and 30S subunits in favor of the free subunits, thus enhancing the availability of 30S subunits on which protein synthesis initiation begins. The chain is Translation initiation factor IF-3 from Helicobacter pylori (strain J99 / ATCC 700824) (Campylobacter pylori J99).